The following is a 712-amino-acid chain: Aryl hydrocarbon receptor nuclear translocator 2 (712 aa).

Residues 36–73 (AGAMPARGGKRRSGMDFDDEDGEGPSKFSRENHSEIER) form a disordered region. Arg42 carries the omega-N-methylarginine modification. Positions 63-73 (FSRENHSEIER) are enriched in basic and acidic residues. The region spanning 63–116 (FSRENHSEIERRRRNKMTQYITELSDMVPTCSALARKPDKLTILRMAVSHMKSM) is the bHLH domain. PAS domains lie at 134 to 209 (TEQE…MTGR) and 323 to 393 (PVCM…VKLK). Positions 398–441 (SVMYRFRTKNREWLLIRTSSFTFQNPYSDEIEYVICTNTNVKQL) constitute a PAC domain. A disordered region spans residues 573 to 712 (AWTGSRPPFP…DLGMFPPFSE (140 aa)). 2 stretches are compositionally biased toward low complexity: residues 597 to 626 (SSHPYPADPSSYSPLSSPAASSPSGNAYPS) and 653 to 675 (SQWQSQHHGQQSGEQHSHQQPGQ).

Efficient DNA binding requires dimerization with another bHLH protein. Heterodimer with NPAS4 or SIM1. Heterodimer with the aryl hydrocarbon receptor (AHR) or the SIM1 protein. Interacts with TACC3. As to expression, restricted to adult brain and kidney.

Its subcellular location is the nucleus. Its function is as follows. Transcription factor that plays a role in the development of the hypothalamo-pituitary axis, postnatal brain growth, and visual and renal function. Specifically recognizes the xenobiotic response element (XRE). The protein is Aryl hydrocarbon receptor nuclear translocator 2 (Arnt2) of Mus musculus (Mouse).